The following is a 358-amino-acid chain: Peptide chain release factor 1 (358 aa).

Gln-233 is subject to N5-methylglutamine.

The protein belongs to the prokaryotic/mitochondrial release factor family. Methylated by PrmC. Methylation increases the termination efficiency of RF1.

It localises to the cytoplasm. Functionally, peptide chain release factor 1 directs the termination of translation in response to the peptide chain termination codons UAG and UAA. The protein is Peptide chain release factor 1 of Beijerinckia indica subsp. indica (strain ATCC 9039 / DSM 1715 / NCIMB 8712).